Consider the following 388-residue polypeptide: UTP--glucose-1-phosphate uridylyltransferase (388 aa).

D118 contacts Mg(2+).

This sequence belongs to the CugP-type UDP-glucose pyrophosphorylase family. The cofactor is Mg(2+).

The catalysed reaction is alpha-D-glucose 1-phosphate + UTP + H(+) = UDP-alpha-D-glucose + diphosphate. Functionally, catalyzes the formation of UDP-glucose, from UTP and glucose 1-phosphate. Is highly specific since it cannot use other NTPs such as dTTP, CTP, ATP, and GTP, and other sugar-1P such as GlcNAc-1P, Gal-1P, and Man-1P, as substrates. Has probably a central and essential role as the substrate supplier for galactolipid synthesis; galactolipids are major constituents of the photosynthetic thylakoid membrane and important for photosynthetic activity. The chain is UTP--glucose-1-phosphate uridylyltransferase from Synechocystis sp. (strain ATCC 27184 / PCC 6803 / Kazusa).